A 159-amino-acid polypeptide reads, in one-letter code: 2-C-methyl-D-erythritol 2,4-cyclodiphosphate synthase (159 aa).

A divalent metal cation-binding residues include Asp8 and His10. Residues 8-10 and 34-35 contribute to the 4-CDP-2-C-methyl-D-erythritol 2-phosphate site; these read DVH and HS. An a divalent metal cation-binding site is contributed by His42. Residues 56-58, 61-65, 100-106, 132-135, Phe139, and Arg142 each bind 4-CDP-2-C-methyl-D-erythritol 2-phosphate; these read DIG, FPDTD, AQAPKML, and TTTE.

It belongs to the IspF family. Homotrimer. The cofactor is a divalent metal cation.

It carries out the reaction 4-CDP-2-C-methyl-D-erythritol 2-phosphate = 2-C-methyl-D-erythritol 2,4-cyclic diphosphate + CMP. It functions in the pathway isoprenoid biosynthesis; isopentenyl diphosphate biosynthesis via DXP pathway; isopentenyl diphosphate from 1-deoxy-D-xylulose 5-phosphate: step 4/6. In terms of biological role, involved in the biosynthesis of isopentenyl diphosphate (IPP) and dimethylallyl diphosphate (DMAPP), two major building blocks of isoprenoid compounds. Catalyzes the conversion of 4-diphosphocytidyl-2-C-methyl-D-erythritol 2-phosphate (CDP-ME2P) to 2-C-methyl-D-erythritol 2,4-cyclodiphosphate (ME-CPP) with a corresponding release of cytidine 5-monophosphate (CMP). The polypeptide is 2-C-methyl-D-erythritol 2,4-cyclodiphosphate synthase (Klebsiella pneumoniae (strain 342)).